The following is a 335-amino-acid chain: N-acetyl-gamma-glutamyl-phosphate reductase (335 aa).

The active site involves C155.

The protein belongs to the NAGSA dehydrogenase family. Type 1 subfamily.

It is found in the cytoplasm. The catalysed reaction is N-acetyl-L-glutamate 5-semialdehyde + phosphate + NADP(+) = N-acetyl-L-glutamyl 5-phosphate + NADPH + H(+). The protein operates within amino-acid biosynthesis; L-arginine biosynthesis; N(2)-acetyl-L-ornithine from L-glutamate: step 3/4. Its function is as follows. Catalyzes the NADPH-dependent reduction of N-acetyl-5-glutamyl phosphate to yield N-acetyl-L-glutamate 5-semialdehyde. This Pasteurella multocida (strain Pm70) protein is N-acetyl-gamma-glutamyl-phosphate reductase.